The chain runs to 277 residues: Diaminopimelate epimerase (277 aa).

Substrate is bound by residues N11 and N72. Residue C81 is the Proton donor of the active site. Substrate is bound by residues 82–83, N189, and 207–208; these read GN and ER. C217 functions as the Proton acceptor in the catalytic mechanism. Residue 218–219 coordinates substrate; sequence GT.

This sequence belongs to the diaminopimelate epimerase family. Homodimer.

It localises to the cytoplasm. The catalysed reaction is (2S,6S)-2,6-diaminopimelate = meso-2,6-diaminopimelate. It functions in the pathway amino-acid biosynthesis; L-lysine biosynthesis via DAP pathway; DL-2,6-diaminopimelate from LL-2,6-diaminopimelate: step 1/1. Catalyzes the stereoinversion of LL-2,6-diaminopimelate (L,L-DAP) to meso-diaminopimelate (meso-DAP), a precursor of L-lysine and an essential component of the bacterial peptidoglycan. The chain is Diaminopimelate epimerase from Hydrogenobaculum sp. (strain Y04AAS1).